A 426-amino-acid polypeptide reads, in one-letter code: 3-phosphoshikimate 1-carboxyvinyltransferase (426 aa).

3 residues coordinate 3-phosphoshikimate: Lys-22, Ser-23, and Arg-27. Phosphoenolpyruvate is bound at residue Lys-22. Positions 96 and 124 each coordinate phosphoenolpyruvate. 3-phosphoshikimate contacts are provided by Ser-170, Ser-171, Gln-172, Ser-198, Asp-314, Asn-337, and Lys-341. Gln-172 is a phosphoenolpyruvate binding site. Asp-314 (proton acceptor) is an active-site residue. Residues Arg-345, Arg-387, and Lys-412 each coordinate phosphoenolpyruvate.

It belongs to the EPSP synthase family. As to quaternary structure, monomer.

It is found in the cytoplasm. It carries out the reaction 3-phosphoshikimate + phosphoenolpyruvate = 5-O-(1-carboxyvinyl)-3-phosphoshikimate + phosphate. Its pathway is metabolic intermediate biosynthesis; chorismate biosynthesis; chorismate from D-erythrose 4-phosphate and phosphoenolpyruvate: step 6/7. Its function is as follows. Catalyzes the transfer of the enolpyruvyl moiety of phosphoenolpyruvate (PEP) to the 5-hydroxyl of shikimate-3-phosphate (S3P) to produce enolpyruvyl shikimate-3-phosphate and inorganic phosphate. This chain is 3-phosphoshikimate 1-carboxyvinyltransferase, found in Vibrio campbellii (strain ATCC BAA-1116).